A 93-amino-acid chain; its full sequence is Pyrimidine/purine nucleoside phosphorylase (93 aa).

Belongs to the nucleoside phosphorylase PpnP family.

It carries out the reaction a purine D-ribonucleoside + phosphate = a purine nucleobase + alpha-D-ribose 1-phosphate. The enzyme catalyses adenosine + phosphate = alpha-D-ribose 1-phosphate + adenine. It catalyses the reaction cytidine + phosphate = cytosine + alpha-D-ribose 1-phosphate. The catalysed reaction is guanosine + phosphate = alpha-D-ribose 1-phosphate + guanine. It carries out the reaction inosine + phosphate = alpha-D-ribose 1-phosphate + hypoxanthine. The enzyme catalyses thymidine + phosphate = 2-deoxy-alpha-D-ribose 1-phosphate + thymine. It catalyses the reaction uridine + phosphate = alpha-D-ribose 1-phosphate + uracil. The catalysed reaction is xanthosine + phosphate = alpha-D-ribose 1-phosphate + xanthine. Catalyzes the phosphorolysis of diverse nucleosides, yielding D-ribose 1-phosphate and the respective free bases. Can use uridine, adenosine, guanosine, cytidine, thymidine, inosine and xanthosine as substrates. Also catalyzes the reverse reactions. In Pseudomonas syringae pv. syringae (strain B728a), this protein is Pyrimidine/purine nucleoside phosphorylase.